The chain runs to 1889 residues: Bromodomain adjacent to zinc finger domain protein 2A (1889 aa).

3 disordered regions span residues 1-59, 384-433, and 479-526; these read MEME…NGLS, FGLN…SPAA, and TTPV…GAVA. Over residues 35-59 the composition is skewed to polar residues; the sequence is TNGSPMNFPQQGKSLNGDVNVNGLS. The tract at residues 332-726 is required for TTF1 binding; sequence EGNPVISALD…ESQTPVQGQA (395 aa). Residues 423-433 are compositionally biased toward low complexity; sequence PAVSPTASPAA. Polar residues-rich tracts occupy residues 479-489 and 498-509; these read TTPVTSPQGSP and QTVSPARKNVSS. T499 is modified (phosphothreonine). Position 501 is a phosphoserine (S501). The MBD domain occupies 538-609; it reads IATPEEVRLP…EHFSFSPRMP (72 aa). At T540 the chain carries Phosphothreonine. S605 bears the Phosphoserine mark. The disordered stretch occupies residues 638–791; the sequence is QAITGKRGRP…ARPSCRADKT (154 aa). DNA-binding regions (a.T hook) lie at residues 641-653 and 662-674; these read TGKR…NEKA and KRGR…IKMP. A compositionally biased stretch (basic and acidic residues) spans 648–660; it reads RNNEKAKNKEVPK. A compositionally biased stretch (basic residues) spans 661–670; it reads VKRGRGRPPK. K672 is modified (N6-acetyllysine; by KAT8). The span at 678-701 shows a compositional bias: basic and acidic residues; that stretch reads NKTDNRLPKKLETQEILSEDDKAK. Residues 686–813 are a coiled coil; sequence KKLETQEILS…QQAILEEMKK (128 aa). A compositionally biased stretch (basic residues) spans 702 to 713; the sequence is MTKNKKKMRQKV. Positions 716 to 726 are enriched in polar residues; it reads GESQTPVQGQA. Composition is skewed to basic and acidic residues over residues 731–740 and 748–791; these read KQDTKSLKQK and AEKE…ADKT. K790 carries the N6-acetyllysine modification. Residues 839 to 904 enclose the DDT domain; that stretch reads SRAFSDCLTI…LKAALHDPGL (66 aa). Residue K857 forms a Glycyl lysine isopeptide (Lys-Gly) (interchain with G-Cter in SUMO2) linkage. The interval 1039–1063 is disordered; that stretch reads EETSGIEEEEEEENTTAVHGRRGRK. S1042 carries the post-translational modification Phosphoserine. Residues 1042–1052 are compositionally biased toward acidic residues; the sequence is SGIEEEEEEEN. Residues K1141 and K1163 each participate in a glycyl lysine isopeptide (Lys-Gly) (interchain with G-Cter in SUMO2) cross-link. Disordered regions lie at residues 1147–1247 and 1269–1397; these read LMEV…GQSQ and LSSS…GRPP. Position 1174 is a phosphoserine (S1174). Residues 1176–1188 constitute a DNA-binding region (a.T hook 3); that stretch reads ARSRGRPRKPKPG. Composition is skewed to polar residues over residues 1190–1231, 1269–1278, and 1331–1346; these read LQPQ…QPSS, LSSSVLTPDS, and DQPT…SKPM. Phosphoserine is present on residues S1374, S1377, and S1383. The a.T hook 4 DNA-binding region spans 1390 to 1402; that stretch reads PKRRGRPPSKFFK. S1545 bears the Phosphoserine mark. Residues K1662 and K1695 each participate in a glycyl lysine isopeptide (Lys-Gly) (interchain with G-Cter in SUMO2) cross-link. A PHD-type zinc finger spans residues 1662–1712; that stretch reads KVTCLVCRKGDNDEFLLLCDGCDRGCHIYCHRPKMEAVPEGDWFCAVCLSQ. Residues 1720-1778 are disordered; the sequence is QRPGFPKRGQKRKSSFPLTFPEGDSRRRMLSRSRDSPAVPRYPEDGLSPPKRRRHSMRS. Phosphoserine is present on S1733. Phosphothreonine is present on T1738. Residues 1742 to 1754 are compositionally biased toward basic and acidic residues; sequence GDSRRRMLSRSRD. S1755 and S1767 each carry phosphoserine. Residues 1769–1778 show a composition bias toward basic residues; that stretch reads PKRRRHSMRS. The Bromo domain occupies 1777 to 1881; that stretch reads RSHHSDLTFC…RFFESRWEEF (105 aa).

Belongs to the WAL family. Component of the NoRC-1 ISWI chromatin remodeling complex at least composed of SMARCA1 and BAZ2A/TIP5, which regulates the spacing of histone octamers on the DNA template to facilitate access to DNA. Within the NoRC-1 ISWI chromatin remodeling complex interacts with SMARCA1; the interaction is direct. Component of the NoRC-5 ISWI chromatin remodeling complex (also called the NoRC nucleolar-remodeling complex), at least composed of SMARCA5/SNF2H and BAZ2A/TIP5, which regulates the spacing of histone octamers on the DNA template to facilitate access to DNA. Within the NoRC-5 ISWI chromatin remodeling complexes interacts with SMARCA5/SNF2H; the interaction is direct. Interacts with TTF1; the interaction is required for recruitment of the NoRC-5 ISWI chromatin remodeling complex to rDNA. Interacts with HDAC1. Interacts with SIN3A. Interacts with DNMT1 and DNM3B. Interacts with BEND3 and USP21. Ubiquitinated. Deubiquitinated by USP21 leading to its stabilization. Post-translationally, acetylation at Lys-672 by KAT8/MOF promotes its dissociation from pRNA, affecting heterochromatin formation, nucleosome positioning and rDNA silencing. Deacetylation by SIRT1 in late S phase enhances pRNA-binding, allowing de novo DNA methylation and heterochromatin formation. Acetylation is high during S phase and declines to background levels in late S phase when the silent copies of rRNA genes are replicated.

The protein resides in the nucleus. The protein localises to the nucleolus. Its function is as follows. Regulatory subunit of the ATP-dependent NoRC-1 and NoRC-5 ISWI chromatin remodeling complexes, which form ordered nucleosome arrays on chromatin and facilitate access to DNA during DNA-templated processes such as DNA replication, transcription, and repair. Both complexes regulate the spacing of nucleosomes along the chromatin and have the ability to slide mononucleosomes to the center of a DNA template. Directly stimulates the ATPase activity of SMARCA5 in the NoRC-5 ISWI chromatin remodeling complex. The NoRC-1 ISWI chromatin remodeling complex has a lower ATP hydrolysis rate than the NoRC-5 ISWI chromatin remodeling complex. Within the NoRC-5 ISWI chromatin remodeling complex, mediates silencing of a fraction of rDNA by recruiting histone-modifying enzymes and DNA methyltransferases, leading to heterochromatin formation and transcriptional silencing. In the complex, it plays a central role by being recruited to rDNA and by targeting chromatin modifying enzymes such as HDAC1, leading to repress RNA polymerase I transcription. Recruited to rDNA via its interaction with TTF1 and its ability to recognize and bind histone H4 acetylated on 'Lys-16' (H4K16ac), leading to deacetylation of H4K5ac, H4K8ac, H4K12ac but not H4K16ac. Specifically binds pRNAs, 150-250 nucleotide RNAs that are complementary in sequence to the rDNA promoter; pRNA-binding is required for heterochromatin formation and rDNA silencing. This Mus musculus (Mouse) protein is Bromodomain adjacent to zinc finger domain protein 2A (Baz2a).